The primary structure comprises 894 residues: DNA mismatch repair protein MutS (894 aa).

632-639 contacts ATP; the sequence is GPNMGGKS.

Belongs to the DNA mismatch repair MutS family.

In terms of biological role, this protein is involved in the repair of mismatches in DNA. It is possible that it carries out the mismatch recognition step. This protein has a weak ATPase activity. In Paraburkholderia xenovorans (strain LB400), this protein is DNA mismatch repair protein MutS.